Reading from the N-terminus, the 391-residue chain is Tumor susceptibility gene 101 protein (391 aa).

Alanine 2 carries the N-acetylalanine modification. The UEV domain maps to alanine 2–proline 145. The interval proline 159–serine 163 is interaction with CEP55. Residues tyrosine 197–glycine 220 form a disordered region. Residues threonine 200–glycine 215 are compositionally biased toward polar residues. Phosphothreonine is present on threonine 221. The stretch at aspartate 237–glutamate 317 forms a coiled coil. The PTAP/PSAP motif signature appears at proline 321–proline 324. One can recognise an SB domain in the interval alanine 323–tyrosine 391.

It belongs to the ubiquitin-conjugating enzyme family. UEV subfamily. Component of the ESCRT-I complex (endosomal sorting complex required for transport I) which consists of TSG101, VPS28, a VPS37 protein (VPS37A to -D) and MVB12A or MVB12B in a 1:1:1:1 stoichiometry. Interacts with VPS37A, VPS37B and VPS37C. Component of an ESCRT-I complex (endosomal sorting complex required for transport I) which consists of TSG101, VPS28, VPS37A and UBAP1 in a 1:1:1:1 stoichiometry. Interacts with DMAP1. Interacts with GMCL. Interacts with ubiquitin, stathmin and AATF. Interacts with HGS; the interaction mediates the association with the ESCRT-0 complex. Interacts with GGA1 and GGA3. Interacts (via UEV domain) with PDCD6IP/AIP1. Interacts with VPS28, SNF8 and VPS36. Self-associates. Interacts with MVB12A; the association appears to be mediated by the TSG101-VPS37 binary subcomplex. Interacts with VPS37D. Interacts with LRSAM1. Interacts with CEP55; the interaction is required for cytokinesis. Interacts with PDCD6. Interacts with LITAF. Interacts with murine leukemia virus Gag polyprotein (via PSAP motif). Interacts with MGRN1. Interacts with ARRDC1; recruits TSG101 to the plasma membrane. Post-translationally, monoubiquitinated at multiple sites by LRSAM1 and by MGRN1. Ubiquitination inactivates it, possibly by regulating its shuttling between an active membrane-bound protein and an inactive soluble form. Ubiquitination by MGRN1 requires the presence of UBE2D1. Ubiquitous. Higher expression in brain and mammary gland. Lower expression in liver and tumoral tissues.

The protein localises to the cytoplasm. The protein resides in the early endosome membrane. It is found in the late endosome membrane. Its subcellular location is the cytoskeleton. It localises to the microtubule organizing center. The protein localises to the centrosome. The protein resides in the midbody. It is found in the midbody ring. Its subcellular location is the nucleus. Component of the ESCRT-I complex, a regulator of vesicular trafficking process. Binds to ubiquitinated cargo proteins and is required for the sorting of endocytic ubiquitinated cargos into multivesicular bodies (MVBs). Mediates the association between the ESCRT-0 and ESCRT-I complex. Required for completion of cytokinesis; the function requires CEP55. May be involved in cell growth and differentiation. Acts as a negative growth regulator. Required for the exosomal release of SDCBP, CD63 and syndecan. It may also play a role in the extracellular release of microvesicles that differ from the exosomes. The polypeptide is Tumor susceptibility gene 101 protein (Tsg101) (Mus musculus (Mouse)).